The chain runs to 409 residues: AT-rich interactive domain-containing protein 3C (409 aa).

Residues 1–14 (MEALQRQQAARLAQ) are compositionally biased toward low complexity. The tract at residues 1-91 (MEALQRQQAA…SPSSQSPGIQ (91 aa)) is disordered. Over residues 19–30 (LAPPRLPLPQPP) the composition is skewed to pro residues. The segment covering 49–70 (AEEEEGAEDEEGETPLAEEETA) has biased composition (acidic residues). Residues 110–202 (DPKRKEFLDD…YLYPYECETR (93 aa)) form the ARID domain. 3 disordered regions span residues 233–274 (NLAG…PAHA), 306–333 (TREK…RLGA), and 385–409 (PVPA…STLP). A compositionally biased stretch (low complexity) spans 235 to 257 (AGPTPRGAPGPASSHGPAPTATP). The REKLES domain occupies 301 to 386 (LASEATREKL…GILFARRQPV (86 aa)). The segment covering 306 to 320 (TREKLAPEEPPEKRA) has biased composition (basic and acidic residues). The segment covering 393 to 402 (TNPPPLPSTG) has biased composition (pro residues).

Interacts (via REKLES DOMAIN) with NPM1; the interaction mediates ARID3C nuclear shuttling.

Its subcellular location is the nucleus. In terms of biological role, transcription factor involved in monocyte-to-macrophage differentiation. Forms a complex with NPM1 to translocate to the nucleus, acting as a transcription factor that promotes the expression of the genes involved in macrophage differentiation, such as STAT3, STAT1 and JUNB. In Mus musculus (Mouse), this protein is AT-rich interactive domain-containing protein 3C (Arid3c).